Reading from the N-terminus, the 235-residue chain is Purine nucleoside phosphorylase DeoD-type (235 aa).

Histidine 4 contacts a purine D-ribonucleoside. Residues glycine 20, arginine 24, arginine 43, and 87-90 (RVGT) contribute to the phosphate site. A purine D-ribonucleoside-binding positions include glutamate 162, 179 to 181 (EME), and 203 to 204 (SD). Catalysis depends on aspartate 204, which acts as the Proton donor.

Belongs to the PNP/UDP phosphorylase family. In terms of assembly, homohexamer; trimer of homodimers.

It catalyses the reaction a purine D-ribonucleoside + phosphate = a purine nucleobase + alpha-D-ribose 1-phosphate. The catalysed reaction is a purine 2'-deoxy-D-ribonucleoside + phosphate = a purine nucleobase + 2-deoxy-alpha-D-ribose 1-phosphate. Its function is as follows. Catalyzes the reversible phosphorolytic breakdown of the N-glycosidic bond in the beta-(deoxy)ribonucleoside molecules, with the formation of the corresponding free purine bases and pentose-1-phosphate. This chain is Purine nucleoside phosphorylase DeoD-type, found in Bacillus cereus (strain ATCC 14579 / DSM 31 / CCUG 7414 / JCM 2152 / NBRC 15305 / NCIMB 9373 / NCTC 2599 / NRRL B-3711).